We begin with the raw amino-acid sequence, 237 residues long: Eukaryotic translation initiation factor 3 subunit K (237 aa).

A PCI domain is found at 44–219 (CDCNANRALL…EARKAEIRED (176 aa)).

It belongs to the eIF-3 subunit K family. As to quaternary structure, component of the eukaryotic translation initiation factor 3 (eIF-3) complex.

It localises to the cytoplasm. Component of the eukaryotic translation initiation factor 3 (eIF-3) complex, which is involved in protein synthesis of a specialized repertoire of mRNAs and, together with other initiation factors, stimulates binding of mRNA and methionyl-tRNAi to the 40S ribosome. The eIF-3 complex specifically targets and initiates translation of a subset of mRNAs involved in cell proliferation. The sequence is that of Eukaryotic translation initiation factor 3 subunit K from Neurospora crassa (strain ATCC 24698 / 74-OR23-1A / CBS 708.71 / DSM 1257 / FGSC 987).